The following is a 528-amino-acid chain: 2-isopropylmalate synthase (528 aa).

One can recognise a Pyruvate carboxyltransferase domain in the interval Ile12–Val279. Residues Asp21, His214, His216, and Asn250 each contribute to the Mn(2+) site. The segment at Arg401–Ala528 is regulatory domain.

Belongs to the alpha-IPM synthase/homocitrate synthase family. LeuA type 1 subfamily. Homodimer. The cofactor is Mn(2+).

It is found in the cytoplasm. The catalysed reaction is 3-methyl-2-oxobutanoate + acetyl-CoA + H2O = (2S)-2-isopropylmalate + CoA + H(+). Its pathway is amino-acid biosynthesis; L-leucine biosynthesis; L-leucine from 3-methyl-2-oxobutanoate: step 1/4. Catalyzes the condensation of the acetyl group of acetyl-CoA with 3-methyl-2-oxobutanoate (2-ketoisovalerate) to form 3-carboxy-3-hydroxy-4-methylpentanoate (2-isopropylmalate). This chain is 2-isopropylmalate synthase, found in Stenotrophomonas maltophilia (strain K279a).